The sequence spans 473 residues: MSKPVITRFAPSPTGYLHIGGARTALFNWLYAKHCGGKMLLRIEDTDRERSTEAATAAILDGLTWLGLDWDGEAISQFERAPRHREVAEELVANGKAYYCYASPEELEEMREKARAEGRPPRYDGRWRDRDPSEAPAGVKPVIRIKAPRDGETVVHDAVQGDVRFPNKDLDDFIILRSDGTPTYMHAVVVDDHDMGVTHIIRGDDHLTNAARQTIIYNAMGWDVPQMSHIPLIHGADGAKLSKRHGALGVDAYRAIGYLPAALRNYLVRLGWSHGDDEIMSTEQMIEWFDVKDINKGAARFDFQKLEAINGLYMRSSDDQALFDALVAVLPEIEGGKELAEALDDKGRAQLLLAMPGLKERAKTLVELADGAKFIFASRPLALDEKAASLLNDEGRAVLKPVYPVLEAMGEWTAESLDAAIRAHAEAEGLKLGKIAQPLRAALTGRATSPGVFDVLVVLGREESLARIGDQIG.

Positions 11-21 match the 'HIGH' region motif; sequence PSPTGYLHIGG. The segment covering 113 to 133 has biased composition (basic and acidic residues); it reads KARAEGRPPRYDGRWRDRDPS. The tract at residues 113–136 is disordered; the sequence is KARAEGRPPRYDGRWRDRDPSEAP. Positions 240–244 match the 'KMSKS' region motif; the sequence is KLSKR. Lysine 243 provides a ligand contact to ATP.

Belongs to the class-I aminoacyl-tRNA synthetase family. Glutamate--tRNA ligase type 1 subfamily. Monomer.

It is found in the cytoplasm. The catalysed reaction is tRNA(Glu) + L-glutamate + ATP = L-glutamyl-tRNA(Glu) + AMP + diphosphate. Functionally, catalyzes the attachment of glutamate to tRNA(Glu) in a two-step reaction: glutamate is first activated by ATP to form Glu-AMP and then transferred to the acceptor end of tRNA(Glu). In Brucella melitensis biotype 1 (strain ATCC 23456 / CCUG 17765 / NCTC 10094 / 16M), this protein is Glutamate--tRNA ligase 1.